The sequence spans 484 residues: UBX domain-containing protein 11 (484 aa).

The interval 1 to 28 (MSSPLASLSKTRKVPLESESVNPGRRGI) is disordered. Positions 69 to 147 (HDSELMASMT…IGEMERFLSD (79 aa)) form a coiled coil. Positions 227–291 (LEPIPLKVYR…VSDLRNQIYP (65 aa)) constitute an SEP domain. One can recognise a UBX domain in the interval 389–466 (PMPLLSMLRI…GLVPNATLLL (78 aa)). Phosphoserine occurs at positions 478 and 482.

As to quaternary structure, interacts with GNA12, GNA13, RND1, RND2 and RND3.

The protein resides in the cytoplasm. The protein localises to the cytoskeleton. Its function is as follows. May be involved in the reorganization of actin cytoskeleton mediated by RND1, RND2 and RND3. Promotes RHOA activation mediated by GNA12 and GNA13. This is UBX domain-containing protein 11 (Ubxn11) from Mus musculus (Mouse).